We begin with the raw amino-acid sequence, 164 residues long: NADH-quinone oxidoreductase subunit I (164 aa).

4Fe-4S ferredoxin-type domains are found at residues 55–85 (LRRY…IDAE) and 95–124 (TRYD…EGPN). Residues Cys65, Cys68, Cys71, Cys75, Cys104, Cys107, Cys110, and Cys114 each coordinate [4Fe-4S] cluster.

This sequence belongs to the complex I 23 kDa subunit family. NDH-1 is composed of 14 different subunits. Subunits NuoA, H, J, K, L, M, N constitute the membrane sector of the complex. It depends on [4Fe-4S] cluster as a cofactor.

It is found in the cell inner membrane. The enzyme catalyses a quinone + NADH + 5 H(+)(in) = a quinol + NAD(+) + 4 H(+)(out). Functionally, NDH-1 shuttles electrons from NADH, via FMN and iron-sulfur (Fe-S) centers, to quinones in the respiratory chain. The immediate electron acceptor for the enzyme in this species is believed to be ubiquinone. Couples the redox reaction to proton translocation (for every two electrons transferred, four hydrogen ions are translocated across the cytoplasmic membrane), and thus conserves the redox energy in a proton gradient. The sequence is that of NADH-quinone oxidoreductase subunit I from Jannaschia sp. (strain CCS1).